The primary structure comprises 310 residues: Spermatid maturation protein 1 (310 aa).

Residues 29 to 49 (ILLLLGLIVCINIGINLVTLL) form a helical membrane-spanning segment. The disordered stretch occupies residues 215 to 238 (ALSHKNNAAGSGGCVEGEQAQGQP). Positions 262–286 (VYDARDVRRRLRELTQEVEALSHCY) form a coiled coil.

As to expression, testis-specific. Exclusively present in cytoplasm of steps 14-16 elongated spermatids (at protein level).

It localises to the membrane. It is found in the cytoplasm. Required for proper cytoplasm removal during spermatogenesis. The protein is Spermatid maturation protein 1 (Spem1) of Mus musculus (Mouse).